The sequence spans 474 residues: Aspartyl/glutamyl-tRNA(Asn/Gln) amidotransferase subunit B (474 aa).

The protein belongs to the GatB/GatE family. GatB subfamily. As to quaternary structure, heterotrimer of A, B and C subunits.

It carries out the reaction L-glutamyl-tRNA(Gln) + L-glutamine + ATP + H2O = L-glutaminyl-tRNA(Gln) + L-glutamate + ADP + phosphate + H(+). It catalyses the reaction L-aspartyl-tRNA(Asn) + L-glutamine + ATP + H2O = L-asparaginyl-tRNA(Asn) + L-glutamate + ADP + phosphate + 2 H(+). Its function is as follows. Allows the formation of correctly charged Asn-tRNA(Asn) or Gln-tRNA(Gln) through the transamidation of misacylated Asp-tRNA(Asn) or Glu-tRNA(Gln) in organisms which lack either or both of asparaginyl-tRNA or glutaminyl-tRNA synthetases. The reaction takes place in the presence of glutamine and ATP through an activated phospho-Asp-tRNA(Asn) or phospho-Glu-tRNA(Gln). The protein is Aspartyl/glutamyl-tRNA(Asn/Gln) amidotransferase subunit B of Methanospirillum hungatei JF-1 (strain ATCC 27890 / DSM 864 / NBRC 100397 / JF-1).